The following is a 195-amino-acid chain: Translation machinery-associated protein 22 (195 aa).

In terms of domain architecture, SUI1 spans 94–165 (VLIKRIERNR…EAKEYIEKLL (72 aa)). The tract at residues 176–195 (EQVDEKKKKKATAPGATPAA) is disordered.

The protein belongs to the DENR family. Interacts with the 40S ribosomal subunit.

Its subcellular location is the cytoplasm. This Scheffersomyces stipitis (strain ATCC 58785 / CBS 6054 / NBRC 10063 / NRRL Y-11545) (Yeast) protein is Translation machinery-associated protein 22 (TMA22).